A 241-amino-acid chain; its full sequence is tRNA (guanine-N(7)-)-methyltransferase (241 aa).

Residues E71, E96, D123, and D146 each coordinate S-adenosyl-L-methionine. The active site involves D146. Residues K150, D182, and T219–E222 contribute to the substrate site.

This sequence belongs to the class I-like SAM-binding methyltransferase superfamily. TrmB family.

It carries out the reaction guanosine(46) in tRNA + S-adenosyl-L-methionine = N(7)-methylguanosine(46) in tRNA + S-adenosyl-L-homocysteine. It functions in the pathway tRNA modification; N(7)-methylguanine-tRNA biosynthesis. Its function is as follows. Catalyzes the formation of N(7)-methylguanine at position 46 (m7G46) in tRNA. This chain is tRNA (guanine-N(7)-)-methyltransferase, found in Pseudoalteromonas translucida (strain TAC 125).